We begin with the raw amino-acid sequence, 551 residues long: Protein GZF3 (551 aa).

The segment at 17–43 (DNVFEPKSSENLNSLNQSEEEGHIGRW) is disordered. The segment at 131 to 155 (CKNCLTSTTPLWRRDEHGAMLCNAC) adopts a GATA-type zinc-finger fold. Disordered stretches follow at residues 212–260 (GRKA…SATK), 379–400 (LAPT…QIRS), and 467–490 (SISN…AKDL). The segment covering 228–239 (SQLLMGTSSTAK) has biased composition (polar residues). Residues 244-254 (PKTESKERSDS) are compositionally biased toward basic and acidic residues. Polar residues predominate over residues 388 to 400 (DSNPSEVPNQIRS). Residues 467–477 (SISNSVSSSDV) are compositionally biased toward low complexity. Over residues 478-490 (SGRKFENHPAKDL) the composition is skewed to basic and acidic residues.

It is found in the nucleus. In Saccharomyces cerevisiae (strain ATCC 204508 / S288c) (Baker's yeast), this protein is Protein GZF3 (GZF3).